Consider the following 183-residue polypeptide: Auxin-responsive protein IAA20 (183 aa).

Disordered stretches follow at residues M1–A23 and G42–R77. Positions L3–L7 match the EAR-like (transcriptional repression) motif. The PB1 domain occupies G98–V183.

The protein belongs to the Aux/IAA family. In terms of assembly, homodimers and heterodimers. As to expression, expressed at very low levels in etiolated seedlings and flowers.

The protein localises to the nucleus. Its function is as follows. Aux/IAA proteins are short-lived transcriptional factors that function as repressors of early auxin response genes at low auxin concentrations. This is Auxin-responsive protein IAA20 (IAA20) from Oryza sativa subsp. japonica (Rice).